The chain runs to 425 residues: Adenylosuccinate synthetase (425 aa).

Residues 12–18 and 40–42 contribute to the GTP site; these read GDEGKGK and GHT. Asp13 functions as the Proton acceptor in the catalytic mechanism. Mg(2+)-binding residues include Asp13 and Gly40. Residues 13–16, 38–41, Thr126, Arg140, Gln221, Thr236, and Arg300 each bind IMP; these read DEGK and NAGH. Catalysis depends on His41, which acts as the Proton donor. 296-302 contributes to the substrate binding site; it reads ATTGRPR. Residues Arg302, 328 to 330, and 410 to 412 each bind GTP; these read KLD and STG.

This sequence belongs to the adenylosuccinate synthetase family. As to quaternary structure, homodimer. Requires Mg(2+) as cofactor.

The protein resides in the cytoplasm. It catalyses the reaction IMP + L-aspartate + GTP = N(6)-(1,2-dicarboxyethyl)-AMP + GDP + phosphate + 2 H(+). The protein operates within purine metabolism; AMP biosynthesis via de novo pathway; AMP from IMP: step 1/2. Functionally, plays an important role in the de novo pathway of purine nucleotide biosynthesis. Catalyzes the first committed step in the biosynthesis of AMP from IMP. The polypeptide is Adenylosuccinate synthetase (Thermodesulfovibrio yellowstonii (strain ATCC 51303 / DSM 11347 / YP87)).